The sequence spans 471 residues: UDP-N-acetylmuramoylalanine--D-glutamate ligase (471 aa).

Residue 127 to 133 participates in ATP binding; that stretch reads GSNGKST.

Belongs to the MurCDEF family.

It localises to the cytoplasm. The catalysed reaction is UDP-N-acetyl-alpha-D-muramoyl-L-alanine + D-glutamate + ATP = UDP-N-acetyl-alpha-D-muramoyl-L-alanyl-D-glutamate + ADP + phosphate + H(+). It participates in cell wall biogenesis; peptidoglycan biosynthesis. Its function is as follows. Cell wall formation. Catalyzes the addition of glutamate to the nucleotide precursor UDP-N-acetylmuramoyl-L-alanine (UMA). The chain is UDP-N-acetylmuramoylalanine--D-glutamate ligase from Colwellia psychrerythraea (strain 34H / ATCC BAA-681) (Vibrio psychroerythus).